Here is a 316-residue protein sequence, read N- to C-terminus: Pantothenate kinase (316 aa).

95–102 (GSVAVGKS) is an ATP binding site.

This sequence belongs to the prokaryotic pantothenate kinase family.

It localises to the cytoplasm. The enzyme catalyses (R)-pantothenate + ATP = (R)-4'-phosphopantothenate + ADP + H(+). It participates in cofactor biosynthesis; coenzyme A biosynthesis; CoA from (R)-pantothenate: step 1/5. The polypeptide is Pantothenate kinase (Yersinia enterocolitica serotype O:8 / biotype 1B (strain NCTC 13174 / 8081)).